A 158-amino-acid chain; its full sequence is Placenta growth factor (158 aa).

Residues 1-18 (MLVMKLFTCFLQVLAGLA) form the signal peptide. N-linked (GlcNAc...) asparagine glycosylation is found at Asn-29 and Asn-30. Intrachain disulfides connect Cys-48–Cys-90, Cys-79–Cys-125, and Cys-83–Cys-127. A glycan (N-linked (GlcNAc...) asparagine) is linked at Asn-97. The tract at residues 136–158 (AERRKTKGKRKRSRNSQTEEPHP) is disordered. The segment covering 137 to 149 (ERRKTKGKRKRSR) has biased composition (basic residues).

It belongs to the PDGF/VEGF growth factor family. As to quaternary structure, antiparallel homodimer; disulfide-linked. Also found as heterodimer with VEGFA/VEGF.

The protein localises to the secreted. Growth factor active in angiogenesis and endothelial cell growth, stimulating their proliferation and migration. It binds to the receptor FLT1/VEGFR-1. Also promotes cell tumor growth. The polypeptide is Placenta growth factor (Pgf) (Mus musculus (Mouse)).